Consider the following 313-residue polypeptide: Carbamate kinase 2 (313 aa).

Belongs to the carbamate kinase family.

Its subcellular location is the cytoplasm. The catalysed reaction is hydrogencarbonate + NH4(+) + ATP = carbamoyl phosphate + ADP + H2O + H(+). Its pathway is metabolic intermediate metabolism; carbamoyl phosphate degradation; CO(2) and NH(3) from carbamoyl phosphate: step 1/1. The protein is Carbamate kinase 2 (arcC2) of Staphylococcus aureus (strain bovine RF122 / ET3-1).